Here is a 362-residue protein sequence, read N- to C-terminus: Heat-inducible transcription repressor HrcA (362 aa).

Belongs to the HrcA family.

Functionally, negative regulator of class I heat shock genes (grpE-dnaK-dnaJ and groELS operons). Prevents heat-shock induction of these operons. In Bradyrhizobium sp. (strain ORS 278), this protein is Heat-inducible transcription repressor HrcA.